A 248-amino-acid chain; its full sequence is MSEIRTGFLTMATIILICIGLTMTGTGLYYRKTVSKCIRETDGSFVVIGLLLLVIPQFALYAICCHSKRMFTIYIYAMIFVSIVLGGYSLKCFIYNTTFGIAKNPAEEKRTAKQLVGRLVPESKLAKVTECIIHNHDCNFNASQNSNVWRYCCAQPRGCGVTTMFGQPGEWSWKHQHVENHVPEECSYEYCLSCRGCQMSILKAIVHQWKYLSMFSYPALFLVCLSLAISRSIMDTFDEPDDYRGYYS.

Topologically, residues 1–7 are cytoplasmic; that stretch reads MSEIRTG. A helical membrane pass occupies residues 8 to 28; it reads FLTMATIILICIGLTMTGTGL. At 29–44 the chain is on the extracellular side; sequence YYRKTVSKCIRETDGS. Residues 45-65 form a helical membrane-spanning segment; sequence FVVIGLLLLVIPQFALYAICC. Residues 66–69 are Cytoplasmic-facing; it reads HSKR. Residues 70–90 form a helical membrane-spanning segment; the sequence is MFTIYIYAMIFVSIVLGGYSL. Over 91-208 the chain is Extracellular; sequence KCFIYNTTFG…MSILKAIVHQ (118 aa). N-linked (GlcNAc...) asparagine glycosylation is found at asparagine 96 and asparagine 141. A helical transmembrane segment spans residues 209 to 229; it reads WKYLSMFSYPALFLVCLSLAI. The Cytoplasmic segment spans residues 230-248; sequence SRSIMDTFDEPDDYRGYYS.

This sequence belongs to the tetraspanin (TM4SF) family.

It is found in the membrane. May be involved in the regulation of cell differentiation. This chain is Tetraspanin-16 (TET16), found in Arabidopsis thaliana (Mouse-ear cress).